Consider the following 274-residue polypeptide: MKELKKIIEETYENKNKINLNNLDYEILQTIFRVIKLLNNGIIRISEKKDNTWITHEWLKKAVLLYIYIKENKFIEGSYTSYYDKVPLKYEKYNEKQFKKEKVRIVPPATIRYGAFINYNTIIMPSYINIGAYIDQGTMIDTWATIGSCAQIGKNVHISGGVGIGGVLEPLQNNPTIIEDNCFIGARSEIVEGVVIEKGCVISMGVFIGQSTKIYDRENGKIFYGRVPAHSVVVSGTLPSENRNYNLYAAIIVKKVDAKTLGKTEINQLLRNIK.

Substrate contacts are provided by arginine 104 and aspartate 141.

It belongs to the transferase hexapeptide repeat family. In terms of assembly, homotrimer.

It is found in the cytoplasm. It carries out the reaction (S)-2,3,4,5-tetrahydrodipicolinate + succinyl-CoA + H2O = (S)-2-succinylamino-6-oxoheptanedioate + CoA. It participates in amino-acid biosynthesis; L-lysine biosynthesis via DAP pathway; LL-2,6-diaminopimelate from (S)-tetrahydrodipicolinate (succinylase route): step 1/3. This chain is 2,3,4,5-tetrahydropyridine-2,6-dicarboxylate N-succinyltransferase, found in Buchnera aphidicola subsp. Acyrthosiphon pisum (strain APS) (Acyrthosiphon pisum symbiotic bacterium).